Consider the following 360-residue polypeptide: BLOC-1-related complex subunit 6 (360 aa).

Residues 1–10 (MEAARGRLGP) show a composition bias toward basic and acidic residues. Positions 1–201 (MEAARGRLGP…AGAGGGRRAT (201 aa)) are disordered. The span at 23-35 (VTFSGRPSRTLSK) shows a compositional bias: polar residues. Thr41 carries the phosphothreonine modification. Basic and acidic residues predominate over residues 71–83 (HRPELDTWEDKPS). A compositionally biased stretch (low complexity) spans 89–100 (SGARGSRGTSGS). Ser130 is modified (phosphoserine). Residues 144–156 (EGDDDDDGDDEEA) are compositionally biased toward acidic residues. The residue at position 173 (Ser173) is a Phosphoserine. Gly residues predominate over residues 179–198 (GACGGGGSSSSGEAGAGGGR). Thr201 bears the Phosphothreonine mark. Ser204 is modified (phosphoserine).

This sequence belongs to the BORCS6 family. Component of the BLOC-one-related complex (BORC) which is composed of BLOC1S1, BLOC1S2, BORCS5, BORCS6, BORCS7, BORCS8, KXD1 and SNAPIN.

The protein localises to the lysosome membrane. Its function is as follows. As part of the BORC complex may play a role in lysosomes movement and localization at the cell periphery. Associated with the cytosolic face of lysosomes, the BORC complex may recruit ARL8B and couple lysosomes to microtubule plus-end-directed kinesin motor. The protein is BLOC-1-related complex subunit 6 of Rattus norvegicus (Rat).